The chain runs to 132 residues: Sec-independent protein translocase protein TatB (132 aa).

Residues 2–22 (FDGIGFMELLLIGILGLVVLG) form a helical membrane-spanning segment. 2 stretches are compositionally biased toward polar residues: residues 86–95 (LKQAAQSVNR) and 116–132 (IAET…KNNG). A disordered region spans residues 86 to 132 (LKQAAQSVNRPYQLDESNEQEPKIAPPQANIAETPTQSGDTHSKNNG).

Belongs to the TatB family. As to quaternary structure, the Tat system comprises two distinct complexes: a TatABC complex, containing multiple copies of TatA, TatB and TatC subunits, and a separate TatA complex, containing only TatA subunits. Substrates initially bind to the TatABC complex, which probably triggers association of the separate TatA complex to form the active translocon.

It localises to the cell inner membrane. Functionally, part of the twin-arginine translocation (Tat) system that transports large folded proteins containing a characteristic twin-arginine motif in their signal peptide across membranes. Together with TatC, TatB is part of a receptor directly interacting with Tat signal peptides. TatB may form an oligomeric binding site that transiently accommodates folded Tat precursor proteins before their translocation. This chain is Sec-independent protein translocase protein TatB, found in Shewanella denitrificans (strain OS217 / ATCC BAA-1090 / DSM 15013).